The following is a 106-amino-acid chain: Nucleoid-associated protein Abu_0429 (106 aa).

The protein belongs to the YbaB/EbfC family. As to quaternary structure, homodimer.

It is found in the cytoplasm. The protein localises to the nucleoid. Its function is as follows. Binds to DNA and alters its conformation. May be involved in regulation of gene expression, nucleoid organization and DNA protection. The sequence is that of Nucleoid-associated protein Abu_0429 from Aliarcobacter butzleri (strain RM4018) (Arcobacter butzleri).